We begin with the raw amino-acid sequence, 241 residues long: Endo-chitosanase B (241 aa).

Residues 1 to 17 (MRLSEILAVALVTGATA) form the signal peptide. A glycan (N-linked (GlcNAc...) asparagine) is linked at asparagine 86.

It belongs to the glycosyl hydrolase 75 family.

It localises to the secreted. It catalyses the reaction Endohydrolysis of beta-(1-&gt;4)-linkages between D-glucosamine residues in a partly acetylated chitosan.. Functionally, chitosanase catalyzing the endo-type cleavage of chitosan, the deacylated form of chitin. Chitosanase may be crucial in the degradation of the deacetylated portion of chitin in the fungal cell wall. Chitoolisaccharides produced by the hydrolysis of partially N-acetylated chitosan are known to have many biological activities, including antibacterial activity, immune-enhancing effects, and elicitor activity. The protein is Endo-chitosanase B (csnB) of Aspergillus oryzae (strain ATCC 42149 / RIB 40) (Yellow koji mold).